A 266-amino-acid chain; its full sequence is Undecaprenyl-diphosphatase (266 aa).

Transmembrane regions (helical) follow at residues 1 to 21 (MDTFQVIILALIQGLTEFLPI), 39 to 59 (QGLAFDVAVHIGSLLAVVLYF), 83 to 103 (SKLAWWIILATLPAVILGFAL), 111 to 131 (LRGPGVIAITTVLFGLLLWWA), 144 to 164 (TGWKKALLIGFAQALALIPGT), 183 to 203 (AAARFSFLMSIPVILGAAILM), 218 to 238 (SLALGVGVSFVAAYTCIHLFL), and 246 to 266 (MTPFVIYRLALGALLCAFIFM).

It belongs to the UppP family.

The protein resides in the cell inner membrane. The enzyme catalyses di-trans,octa-cis-undecaprenyl diphosphate + H2O = di-trans,octa-cis-undecaprenyl phosphate + phosphate + H(+). Catalyzes the dephosphorylation of undecaprenyl diphosphate (UPP). Confers resistance to bacitracin. This is Undecaprenyl-diphosphatase from Shewanella woodyi (strain ATCC 51908 / MS32).